The sequence spans 210 residues: T-cell surface glycoprotein CD8 beta chain (210 aa).

Positions 1–21 (MQPGLWLLLATQLAALRGSSV) are cleaved as a signal peptide. An Ig-like V-type domain is found at 22-132 (LQQAPGSVMV…ELTFGKGTRL (111 aa)). At 22–170 (LQQAPGSVMV…VTQKGPSCGL (149 aa)) the chain is on the extracellular side. A disulfide bond links Cys41 and Cys116. Asn102 carries an N-linked (GlcNAc...) asparagine glycan. A disordered region spans residues 139–161 (PTNSQPTKKPTPRKKMCRPPSPV). Residues 171–191 (LTLGLLVAGVLVLLVSLGVAI) form a helical membrane-spanning segment. The Cytoplasmic portion of the chain corresponds to 192-210 (HLYRLKRRARLRLLKQFYK).

In terms of assembly, forms disulfide-linked heterodimers with CD8A at the cell surface. Interacts with CD3D; this interaction couples TCR-CD3 with CD8. Interacts with LCK. Post-translationally, phosphorylated as a consequence of T-cell activation. In terms of processing, palmitoylated at the cytoplasmic tail and thereby targets the heterodimer CD8A/CD8B to lipid rafts unlike CD8A homodimers.

Its subcellular location is the cell membrane. Functionally, integral membrane glycoprotein that plays an essential role in the immune response and serves multiple functions in responses against both external and internal offenses. In T-cells, functions primarily as a coreceptor for MHC class I molecule:peptide complex. The antigens presented by class I peptides are derived from cytosolic proteins while class II derived from extracellular proteins. Interacts simultaneously with the T-cell receptor (TCR) and the MHC class I proteins presented by antigen presenting cells (APCs). In turn, recruits the Src kinase LCK to the vicinity of the TCR-CD3 complex. A palmitoylation site in the cytoplasmic tail of CD8B chain contributes to partitioning of CD8 into the plasma membrane lipid rafts where signaling proteins are enriched. Once LCK recruited, it initiates different intracellular signaling pathways by phosphorylating various substrates ultimately leading to lymphokine production, motility, adhesion and activation of cytotoxic T-lymphocytes (CTLs). Additionally, plays a critical role in thymic selection of CD8+ T-cells. The polypeptide is T-cell surface glycoprotein CD8 beta chain (CD8B) (Felis catus (Cat)).